Here is an 814-residue protein sequence, read N- to C-terminus: MADHAFHRPGPLKQANKAHKTGRHRSKGAIDNAQKGKIGLRPISHKHKQQQRKEQRRNQMNQLRKNKREEVLEQKRKLGGQNTAPFLVCLLPMHEQIDPMSALEILKSCDSELVVENSPSGIVYINLPRFKQRFAFVTPPVGRGNELIALDYLKVCDTTLLLTTAAFGDDEIFDRWGQRIFNMMSAQGIPTPVVALMDLESINPKRRPAAKQAAQKVISKLLPEEKIMQLDTASEALNVMRRIGGQKKRILHNVANRPHLFGDVVEFKPGSDPSDDLGTLEVTGFLRGQSLNVNGLVHIPGLGDFQLSQVVAPPDPYKLDKSRDGENSEVRLLDRSDPSKRTSLQSENIPDPMDAEQTWPTEDEIAASQAETKKMKLVKRVPKGYSEYQAAWIPDVEEVEDPDGKDDDDMSEDDDDDKEDDNEDFMSCDNKSFEDEYEKRDSDTEEFQDTVSVASEAAINDEKYDQQMDFQEERETLKKLQQARTDQLWPDEIDTPLDVPARERFQKYRGLESFRTSPWDAKENLPADYARIYQFQNFDRTKRRILNEAKEFEGVLPGLYVTLYVINVPESRWNAFKSAQLMDNIIVYGMLPHEHQMCVMNVVLQRMPDSEVPLKSKEQLIIQCGYRRFVVNPIYSQHTNGDKHKFERYFRPYETVCATFYAPIQFPPAPVLAFKVNPDSTLALVARGRLLSCNPDRIVLKRVVLSGHPMRINRKSASIRYMFFYKEDVEYFKPVKLRTKCGRLGHIKESLGTHGHMKCYFDGQLRSYDTAFMYLYKRVFPKWTYEECLVRTAEHERQHASANRRSSQQVAMEE.

The segment at 1–67 (MADHAFHRPG…NQMNQLRKNK (67 aa)) is disordered. The span at 16 to 27 (NKAHKTGRHRSK) shows a compositional bias: basic residues. One can recognise a Bms1-type G domain in the interval 84–249 (APFLVCLLPM…MRRIGGQKKR (166 aa)). Disordered stretches follow at residues 316-357 (PYKL…DAEQ) and 392-448 (WIPD…EEFQ). Basic and acidic residues predominate over residues 317 to 340 (YKLDKSRDGENSEVRLLDRSDPSK). The span at 395–426 (DVEEVEDPDGKDDDDMSEDDDDDKEDDNEDFM) shows a compositional bias: acidic residues. Over residues 431–442 (KSFEDEYEKRDS) the composition is skewed to basic and acidic residues. Threonine 444 carries the post-translational modification Phosphothreonine.

The protein belongs to the TRAFAC class translation factor GTPase superfamily. Bms1-like GTPase family. TSR1 subfamily.

The protein resides in the nucleus. It is found in the nucleolus. Required during maturation of the 40S ribosomal subunit in the nucleolus. In Drosophila melanogaster (Fruit fly), this protein is Pre-rRNA-processing protein TSR1 homolog.